A 340-amino-acid polypeptide reads, in one-letter code: Phosphate acyltransferase (340 aa).

This sequence belongs to the PlsX family. In terms of assembly, homodimer. Probably interacts with PlsY.

The protein localises to the cytoplasm. The catalysed reaction is a fatty acyl-[ACP] + phosphate = an acyl phosphate + holo-[ACP]. It participates in lipid metabolism; phospholipid metabolism. Catalyzes the reversible formation of acyl-phosphate (acyl-PO(4)) from acyl-[acyl-carrier-protein] (acyl-ACP). This enzyme utilizes acyl-ACP as fatty acyl donor, but not acyl-CoA. The protein is Phosphate acyltransferase of Pseudomonas syringae pv. tomato (strain ATCC BAA-871 / DC3000).